A 440-amino-acid polypeptide reads, in one-letter code: Putative purine permease YwdJ (440 aa).

Transmembrane regions (helical) follow at residues 3 to 23 (LVLG…VVPV), 39 to 59 (LIQS…LKGH), 67 to 87 (PAGL…TVFA), 96 to 116 (LQGA…FKVI), 130 to 150 (VYLL…ILGI), 156 to 176 (GVDG…FIMT), 188 to 208 (ILLA…AKPI), 231 to 251 (GLII…LASM), 283 to 303 (LLSG…AGFI), 314 to 334 (FMLG…MNTF), 341 to 361 (VGFA…FAEF), 374 to 394 (SIIG…ETAL), and 399 to 419 (PVFI…AIAA).

This sequence belongs to the nucleobase:cation symporter-2 (NCS2) (TC 2.A.40) family.

Its subcellular location is the cell membrane. The polypeptide is Putative purine permease YwdJ (ywdJ) (Bacillus subtilis (strain 168)).